The chain runs to 886 residues: MKSQTKNTPITGDEIRKEFLNFYHEKLHKIIPSASLIPDDPTVMLTIAGMLPFKPVFLGLKERPSKRATSSQKCIRTNDIENVGVTARHHTFFEMLGNFSFGDYFKKEAIEWAWELVTDIYGLSAENIIVSVFHEDDDSVKIWKEDIGIHPKRIIKLGEKDNFWSSGKTGPCGPCSELYFDFKPEKGVQNIDLEDGDRFIEFYNLVFMQYNRDPDGQLTDLKYKNIDTGMGLERMAQILQKKKNNYETDLIFPIIQKASEISKIDYYSSGERTKISLKIIGDHIRAVIHLISDGVIASNLGRGYILRRLIRRMVRHGRLLGLKNEFLSKLASVGIKLMQENYPDLKNNCDHILSEIKIEEIRFRETLERGEKLLDELISSGQKMITGFKAFELYDTYGFPLELTEEIAQENNIGVDVKGFDKEMSAQKERAKAASQIIDLTLEGSLEREIDLFDKTLFNGYDSLDSDAEIKGIFLESTLVKQASEGQKVLIVLDQTSFYGESGGQVGDIGTILSNDLEVVVDNVIRKKNVFLHYGIVKKGILSLGQKVKTKVNDLARAKAAANHTATHLLQSALKVVVNESVGQKGSLVAFNKLRFDFNSSKPITKDQIFKVETLVNSWILENHSLNIKNMAKSEALERGAVAMFGEKYDDEVRVVDVPSVSMELCGGTHVKTTSELGCFKIISEEGISAGVRRIEALSGQSAFEYFSDKNSLVSQLCDLLKANPNQLLDRVNSLQSELINKNKEIQKMKDEIAYFKYSSLSSSANKVGLFSLIISQLDGLDGNSLQSAALDLTSKLGDKSVVILGGIPDKENRKLLFVVSFGEDLVKRGMHAGKLINDISRICSGGGGGKPNFAQAGAKDIDKLNDALEYARKDLRTKLHSYSDK.

Positions 564, 568, 666, and 670 each coordinate Zn(2+).

It belongs to the class-II aminoacyl-tRNA synthetase family. Zn(2+) serves as cofactor.

Its subcellular location is the cytoplasm. It catalyses the reaction tRNA(Ala) + L-alanine + ATP = L-alanyl-tRNA(Ala) + AMP + diphosphate. Its function is as follows. Catalyzes the attachment of alanine to tRNA(Ala) in a two-step reaction: alanine is first activated by ATP to form Ala-AMP and then transferred to the acceptor end of tRNA(Ala). Also edits incorrectly charged Ser-tRNA(Ala) and Gly-tRNA(Ala) via its editing domain. This Prochlorococcus marinus subsp. pastoris (strain CCMP1986 / NIES-2087 / MED4) protein is Alanine--tRNA ligase.